A 725-amino-acid chain; its full sequence is ATP-dependent rRNA helicase SPB4 (725 aa).

The Q motif motif lies at 15–43; that stretch reads WAKLNPPLSPWILDVINSMGFKNMTPVQA. Residues 46-260 enclose the Helicase ATP-binding domain; that stretch reads IPRAVKNQDC…GLGLRNPVRI (215 aa). Position 59–66 (59–66) interacts with ATP; it reads AVTGSGKT. The interval 119–156 is disordered; it reads ESEEETGDVEAHAPPFASSSRSPSPQTPDKPLFPLPML. Residues 132–142 show a composition bias toward low complexity; it reads PPFASSSRSPS. Positions 143–152 are enriched in pro residues; that stretch reads PQTPDKPLFP. The DEAD box signature appears at 207–210; that stretch reads DEAD. The Helicase C-terminal domain occupies 295–458; the sequence is KTLQLIRLLL…YINAYLEEVD (164 aa). The disordered stretch occupies residues 591–725; it reads AQRADNQSSN…IGGGMFDDLE (135 aa). Basic and acidic residues-rich tracts occupy residues 603–646 and 685–707; these read ARAE…KYEW and EIGKEYKSLKREIKEEKSVKESS. Over residues 709-725 the composition is skewed to gly residues; that stretch reads GGAGGGGIGGGMFDDLE.

The protein belongs to the DEAD box helicase family. DDX55/SPB4 subfamily. In terms of assembly, component of pre-60S ribosomal complexes.

It localises to the nucleus. It is found in the nucleolus. It carries out the reaction ATP + H2O = ADP + phosphate + H(+). Its function is as follows. ATP-binding RNA helicase involved in the biogenesis of 60S ribosomal subunits. Binds 90S pre-ribosomal particles and dissociates from pre-60S ribosomal particles after processing of 27SB pre-rRNA. Required for the normal formation of 18S rRNA through the processing of pre-rRNAs at sites A0, A1 and A2, and the normal formation of 25S and 5.8S rRNAs through the processing of pre-rRNAs at sites C1 and C2. The chain is ATP-dependent rRNA helicase SPB4 from Cryptococcus neoformans var. neoformans serotype D (strain JEC21 / ATCC MYA-565) (Filobasidiella neoformans).